The primary structure comprises 143 residues: Large ribosomal subunit protein uL11 (143 aa).

It belongs to the universal ribosomal protein uL11 family. In terms of assembly, part of the ribosomal stalk of the 50S ribosomal subunit. Interacts with L10 and the large rRNA to form the base of the stalk. L10 forms an elongated spine to which L12 dimers bind in a sequential fashion forming a multimeric L10(L12)X complex. In terms of processing, one or more lysine residues are methylated.

In terms of biological role, forms part of the ribosomal stalk which helps the ribosome interact with GTP-bound translation factors. The protein is Large ribosomal subunit protein uL11 of Pseudomonas savastanoi pv. phaseolicola (strain 1448A / Race 6) (Pseudomonas syringae pv. phaseolicola (strain 1448A / Race 6)).